Consider the following 219-residue polypeptide: Glutathione S-transferase (219 aa).

In terms of domain architecture, GST N-terminal spans 2-89; it reads SQPILGYWDI…YLGRKYKLNG (88 aa). Glutathione is bound by residues 8–9, 44–47, lysine 51, 60–61, and 73–74; these read YW, RSEW, NL, and QT. One can recognise a GST C-terminal domain in the interval 91–207; that stretch reads NDHEEIRISM…YIKKQQPKTF (117 aa). Residue tyrosine 117 participates in substrate binding.

The protein belongs to the GST superfamily. Mu family. Homodimer.

It localises to the cytoplasm. It catalyses the reaction RX + glutathione = an S-substituted glutathione + a halide anion + H(+). The protein is Glutathione S-transferase of Dermatophagoides pteronyssinus (European house dust mite).